The sequence spans 346 residues: Dihydroorotase (346 aa).

Histidine 14 and histidine 16 together coordinate Zn(2+). Residues histidine 16–arginine 18 and asparagine 42 contribute to the substrate site. Zn(2+)-binding residues include lysine 100, histidine 137, and histidine 175. Lysine 100 is modified (N6-carboxylysine). Histidine 137 lines the substrate pocket. Leucine 220 contributes to the substrate binding site. Position 248 (aspartate 248) interacts with Zn(2+). Aspartate 248 is a catalytic residue. 2 residues coordinate substrate: histidine 252 and alanine 264.

It belongs to the metallo-dependent hydrolases superfamily. DHOase family. Class II DHOase subfamily. In terms of assembly, homodimer. The cofactor is Zn(2+).

It catalyses the reaction (S)-dihydroorotate + H2O = N-carbamoyl-L-aspartate + H(+). It participates in pyrimidine metabolism; UMP biosynthesis via de novo pathway; (S)-dihydroorotate from bicarbonate: step 3/3. In terms of biological role, catalyzes the reversible cyclization of carbamoyl aspartate to dihydroorotate. The polypeptide is Dihydroorotase (Novosphingobium aromaticivorans (strain ATCC 700278 / DSM 12444 / CCUG 56034 / CIP 105152 / NBRC 16084 / F199)).